The sequence spans 330 residues: Phenylalanine--tRNA ligase alpha subunit (330 aa).

E257 lines the Mg(2+) pocket.

This sequence belongs to the class-II aminoacyl-tRNA synthetase family. Phe-tRNA synthetase alpha subunit type 1 subfamily. As to quaternary structure, tetramer of two alpha and two beta subunits. Mg(2+) serves as cofactor.

It localises to the cytoplasm. The catalysed reaction is tRNA(Phe) + L-phenylalanine + ATP = L-phenylalanyl-tRNA(Phe) + AMP + diphosphate + H(+). This Nostoc punctiforme (strain ATCC 29133 / PCC 73102) protein is Phenylalanine--tRNA ligase alpha subunit.